The following is a 477-amino-acid chain: Glycogen synthase (477 aa).

Residue K15 participates in ADP-alpha-D-glucose binding.

The protein belongs to the glycosyltransferase 1 family. Bacterial/plant glycogen synthase subfamily.

It carries out the reaction [(1-&gt;4)-alpha-D-glucosyl](n) + ADP-alpha-D-glucose = [(1-&gt;4)-alpha-D-glucosyl](n+1) + ADP + H(+). The protein operates within glycan biosynthesis; glycogen biosynthesis. Synthesizes alpha-1,4-glucan chains using ADP-glucose. In Clostridium acetobutylicum (strain ATCC 824 / DSM 792 / JCM 1419 / IAM 19013 / LMG 5710 / NBRC 13948 / NRRL B-527 / VKM B-1787 / 2291 / W), this protein is Glycogen synthase.